The following is a 91-amino-acid chain: CRISPR-associated endoribonuclease Cas2 2 (91 aa).

Residue aspartate 10 participates in Mg(2+) binding.

This sequence belongs to the CRISPR-associated endoribonuclease Cas2 protein family. As to quaternary structure, homodimer, forms a heterotetramer with a Cas1 homodimer. It depends on Mg(2+) as a cofactor.

In terms of biological role, CRISPR (clustered regularly interspaced short palindromic repeat), is an adaptive immune system that provides protection against mobile genetic elements (viruses, transposable elements and conjugative plasmids). CRISPR clusters contain sequences complementary to antecedent mobile elements and target invading nucleic acids. CRISPR clusters are transcribed and processed into CRISPR RNA (crRNA). Functions as a ssRNA-specific endoribonuclease. Involved in the integration of spacer DNA into the CRISPR cassette. The sequence is that of CRISPR-associated endoribonuclease Cas2 2 from Thermodesulfovibrio yellowstonii (strain ATCC 51303 / DSM 11347 / YP87).